Reading from the N-terminus, the 664-residue chain is Fructose-1,6-bisphosphatase class 3 (664 aa).

It belongs to the FBPase class 3 family. It depends on Mn(2+) as a cofactor.

It catalyses the reaction beta-D-fructose 1,6-bisphosphate + H2O = beta-D-fructose 6-phosphate + phosphate. Its pathway is carbohydrate biosynthesis; gluconeogenesis. The sequence is that of Fructose-1,6-bisphosphatase class 3 from Bacteroides fragilis (strain YCH46).